The sequence spans 221 residues: Epididymal secretory glutathione peroxidase (221 aa).

The first 21 residues, 1-21 (MVTELRVFYLVPLLLASYVQT), serve as a signal peptide directing secretion. Residue Cys73 is part of the active site.

It belongs to the glutathione peroxidase family. As to expression, epididymis.

It localises to the secreted. The catalysed reaction is 2 glutathione + H2O2 = glutathione disulfide + 2 H2O. Functionally, protects cells and enzymes from oxidative damage, by catalyzing the reduction of hydrogen peroxide, lipid peroxides and organic hydroperoxide, by glutathione. May constitute a glutathione peroxidase-like protective system against peroxide damage in sperm membrane lipids. The sequence is that of Epididymal secretory glutathione peroxidase (Gpx5) from Mus musculus (Mouse).